A 971-amino-acid polypeptide reads, in one-letter code: MTDVFKVLTPAKNINGEHTHVSMGDTKGTWYLSLNKSQEFYNVYGLALKNGQKLSLAEKPGEYVPLLVDIDLKKEVNGYPNYGSNDFYNDEDIINVVKIFQNAVSENVNRHAKKLTNKNLRCVVLEKDIFIERINESEDKYIVKKGIHLHFPHLFLPKKDIKNSFMPVVKTMIDQENVFQDFINSMDNQIMPSSLIDDISSKYWLMYGSSKEGLNKPYKISKILDHNQQEISISKCFKSETCIDGSPITDTNVEFELPMLLSINPKPSIISNKLFYFKEAPVKLCDALLPVVNNNREKEGRMSSREIEKMKKLTSFLSVSRADDYNQWWTVGITLFNIGTGRDCEEEALEAWKMFSSQSTKYDESRCDLEWAEMKKKNRPLNARTMGSLIFMAKSDNPVALEKYLLAEQMNIENWTSHQNLDVESIKKLKVPVFDTEIAEMFVSQHEDEYLNGNLGWFKFNGTIWSSLESVGRHMRPSLVSLSRSYLNLIPALKYITKTLQNDDEGYEPSDSGFGFDDDDSASTSGGKTTAEITKLVNSKIKLINDLAKKCQNNGPQMSLMKVIEDMIGIDNLNDKMDQNKQLIAFTNGVYDLSLFTFRQGLPEDYITRQMTIPYDITLTMENPKVIKMLNFFKKIFPDEELFEYFMLENCEMYIGGNRDKILQIWTGEGDNGKSVTNKIIENKFGKLSVKFPKGMVTGDPPKAGACFPELTRAQRGVRWAVVDEFAPDETVNAGVIKNLTGGIDNLYARDIQQKGKDVIDIDPFFKLIFICNTIPNIRNPDNATWNRIRVIPFESTFKDSIDDISLEEQKRDKIFLKDTSFCEKETIRELGEAFAWYLIQVFIKKEQARRDARLNGKSFKIKIPAKVNEATELYKAQGNAIADYFNDKFEISDDDNDTINIKLYYQDFLLWFSQTHSNKNVNIDKKKFMKLFVQHAKGDMNTFICTKLKLKETLEEFNLENNEENGMPLF.

Residues 506–528 (GYEPSDSGFGFDDDDSASTSGGK) are disordered. One can recognise an SF3 helicase domain in the interval 624 to 807 (PKVIKMLNFF…FKDSIDDISL (184 aa)). An ATP-binding site is contributed by 668–675 (GEGDNGKS).

The protein belongs to the IIV-6 184R family.

This Acheta domesticus (House cricket) protein is Putative helicase 184R.